The primary structure comprises 567 residues: Vacuolar fusion protein MON1 homolog (567 aa).

Disordered regions lie at residues 1-52 (MDMD…DDEG) and 65-129 (TSAS…DDTS). Residues 7–19 (TNNPSPPGPPDSP) show a composition bias toward pro residues. The span at 43 to 52 (DDYDDDDDEG) shows a compositional bias: acidic residues.

This sequence belongs to the MON1/SAND family. In terms of assembly, interacts with CCZ1A, CCZ1B and RABF2B.

The protein resides in the endosome. It localises to the prevacuolar compartment. Functionally, plays an important role in membrane trafficking through the secretory apparatus. In complex with CCZ1, acts as a guanine exchange factor (GEF) for Rab7 protein family. Promotes the exchange of GDP to GTP, converting it from an inactive GDP-bound form into an active GTP-bound form. The active form is involved in protein trafficking from prevacuolar compartments (PVCs) to vacuoles. May serve as a linker between Rab5 and Rab7 protein families in PVCs and mediate PVC maturation. The sequence is that of Vacuolar fusion protein MON1 homolog from Oryza sativa subsp. japonica (Rice).